The primary structure comprises 437 residues: Sorting nexin-30 (437 aa).

Disordered stretches follow at residues 1 to 44 (MAGG…PDLL) and 54 to 73 (LILP…SSSS). Thr-38 is subject to Phosphothreonine. Residue Ser-40 is modified to Phosphoserine. The span at 63-73 (AGTSSPASSSS) shows a compositional bias: low complexity. Positions 89–210 (RDLFVIVDDP…IFLTAKDLNA (122 aa)) constitute a PX domain. A 1,2-diacyl-sn-glycero-3-phospho-(1D-myo-inositol-3-phosphate)-binding residues include Arg-132, Gln-134, Lys-162, and Arg-176. Residues 234-437 (KLRTRPLEFA…PLLQEKQEAK (204 aa)) enclose the BAR domain.

It belongs to the sorting nexin family. Heterodimer; heterodimerizes with SNX4.

The protein resides in the early endosome membrane. Its function is as follows. Involved in the regulation of endocytosis and in several stages of intracellular trafficking. Together with SNX4, involved in autophagosome assembly. In Homo sapiens (Human), this protein is Sorting nexin-30.